An 840-amino-acid polypeptide reads, in one-letter code: DNA mismatch repair protein MutS (840 aa).

An ATP-binding site is contributed by 601–608 (GPNMSGKS).

It belongs to the DNA mismatch repair MutS family.

In terms of biological role, this protein is involved in the repair of mismatches in DNA. It is possible that it carries out the mismatch recognition step. This protein has a weak ATPase activity. The protein is DNA mismatch repair protein MutS of Lactococcus lactis subsp. cremoris (strain SK11).